Consider the following 497-residue polypeptide: Glycerol kinase (497 aa).

Residue Thr-11 participates in ADP binding. The ATP site is built by Thr-11, Thr-12, and Ser-13. Thr-11 serves as a coordination point for sn-glycerol 3-phosphate. An ADP-binding site is contributed by Arg-15. Positions 81, 82, 134, and 244 each coordinate sn-glycerol 3-phosphate. Residues Arg-81, Glu-82, Tyr-134, Asp-244, and Gln-245 each contribute to the glycerol site. 2 residues coordinate ADP: Thr-266 and Gly-309. The ATP site is built by Thr-266, Gly-309, Gln-313, and Gly-410. 2 residues coordinate ADP: Gly-410 and Asn-414.

This sequence belongs to the FGGY kinase family.

The enzyme catalyses glycerol + ATP = sn-glycerol 3-phosphate + ADP + H(+). Its pathway is polyol metabolism; glycerol degradation via glycerol kinase pathway; sn-glycerol 3-phosphate from glycerol: step 1/1. Inhibited by fructose 1,6-bisphosphate (FBP). Its function is as follows. Key enzyme in the regulation of glycerol uptake and metabolism. Catalyzes the phosphorylation of glycerol to yield sn-glycerol 3-phosphate. This chain is Glycerol kinase, found in Fusobacterium nucleatum subsp. nucleatum (strain ATCC 25586 / DSM 15643 / BCRC 10681 / CIP 101130 / JCM 8532 / KCTC 2640 / LMG 13131 / VPI 4355).